Consider the following 106-residue polypeptide: UPF0145 protein CLH_2273 (106 aa).

This sequence belongs to the UPF0145 family.

The sequence is that of UPF0145 protein CLH_2273 from Clostridium botulinum (strain Alaska E43 / Type E3).